The following is a 296-amino-acid chain: Acetylglutamate kinase (296 aa).

Residues 67-68, R89, and N194 each bind substrate; that span reads GG.

It belongs to the acetylglutamate kinase family. ArgB subfamily.

The protein resides in the cytoplasm. It catalyses the reaction N-acetyl-L-glutamate + ATP = N-acetyl-L-glutamyl 5-phosphate + ADP. The protein operates within amino-acid biosynthesis; L-arginine biosynthesis; N(2)-acetyl-L-ornithine from L-glutamate: step 2/4. Its function is as follows. Catalyzes the ATP-dependent phosphorylation of N-acetyl-L-glutamate. In Brucella abortus (strain S19), this protein is Acetylglutamate kinase.